Here is a 1344-residue protein sequence, read N- to C-terminus: Myb-binding protein 1A (1344 aa).

A disordered region spans residues 1–24; sequence MAEMKSPTKAEPATPAEAAQSDRH. A2 carries the N-acetylalanine modification. The segment at 2–580 is interaction with MYB; the sequence is AEMKSPTKAE…WDQMMSTLKE (579 aa). The span at 7-19 shows a compositional bias: low complexity; the sequence is PTKAEPATPAEAA. 2 positions are modified to N6-acetyllysine: K69 and K156. 2 consecutive short sequence motifs (nuclear export signal) follow at residues 238–256 and 261–279; these read SEDNIPSLVNILKVAANSV and KLPNVALDLLRLALKESRF. Disordered regions lie at residues 710–751 and 1146–1344; these read DEKQ…DKDV and QRPK…VQTP. Over residues 732–747 the composition is skewed to acidic residues; it reads SDMDSEDGEESEEEDR. A compositionally biased stretch (basic and acidic residues) spans 1148–1159; it reads PKSEKKNAKDIP. A Glycyl lysine isopeptide (Lys-Gly) (interchain with G-Cter in SUMO2) cross-link involves residue K1149. The segment at 1152 to 1344 is required for nuclear and nucleolar localization; that stretch reads KKNAKDIPSD…RVASRRVQTP (193 aa). A phosphoserine mark is found at S1160 and S1164. Positions 1168–1185 are enriched in basic residues; it reads TKRKKKGFLPETKKRKKL. S1187 is modified (phosphoserine). Residues 1188–1202 are compositionally biased toward polar residues; that stretch reads EGTTPEKNAASQQDA. T1191 bears the Phosphothreonine mark. Phosphoserine is present on residues S1219 and S1244. A compositionally biased stretch (polar residues) spans 1249–1258; that stretch reads NPTLSPSTPA. At T1251 the chain carries Phosphothreonine. Position 1253 is a phosphoserine (S1253). Residues T1256 and T1277 each carry the phosphothreonine modification. 3 positions are modified to phosphoserine: S1280, S1303, and S1318. Over residues 1317–1329 the composition is skewed to low complexity; that stretch reads LSLVSRSPSLLQS. A Citrulline modification is found at R1322. Phosphoserine occurs at positions 1323, 1325, and 1329.

This sequence belongs to the MYBBP1A family. As to quaternary structure, component of the B-WICH complex, at least composed of SMARCA5/SNF2H, BAZ1B/WSTF, SF3B1, DEK, MYO1C, ERCC6, MYBBP1A and DDX21. Binds to and represses JUN and MYB via the leucine zipper regions present in these proteins. Also binds to and represses PPARGC1A: this interaction is abrogated when PPARGC1A is phosphorylated by MAPK1/ERK. Binds to and stimulates transcription by AHR. Binds to KPNA2. Interacts with CLOCK and CRY1. Citrullinated by PADI4. In terms of tissue distribution, ubiquitously expressed.

Its subcellular location is the nucleus. It is found in the nucleolus. It localises to the cytoplasm. Its function is as follows. May activate or repress transcription via interactions with sequence specific DNA-binding proteins. Repression may be mediated at least in part by histone deacetylase activity (HDAC activity). Acts as a corepressor and in concert with CRY1, represses the transcription of the core circadian clock component PER2. Preferentially binds to dimethylated histone H3 'Lys-9' (H3K9me2) on the PER2 promoter. Has a role in rRNA biogenesis together with PWP1. The sequence is that of Myb-binding protein 1A (Mybbp1a) from Mus musculus (Mouse).